The sequence spans 483 residues: Pre-glycoprotein polyprotein GP complex (483 aa).

A lipid anchor (N-myristoyl glycine; by host) is attached at Gly2. Residues Gly2–Glu17 lie on the Extracellular side of the membrane. The chain crosses the membrane as a helical span at residues Ala18–Met32. Position 33 (Lys33) is a topological domain, cytoplasmic. A helical transmembrane segment spans residues Gly34–Ala53. 2 consecutive stretches face the extracellular side: residues Gly54–Ser58 and Ile59–Asp422. Zn(2+) is bound at residue Cys57. N-linked (GlcNAc...) asparagine; by host glycans are attached at residues Asn73, Asn88, Asn130, and Asn179. Disulfide bonds link Cys85-Cys223, Cys186-Cys204, Cys269-Cys282, Cys291-Cys300, and Cys354-Cys375. Asn216 carries N-linked (GlcNAc...) asparagine; by host glycosylation. Residues Asn355, Asn363, Asn380, and Asn385 are each glycosylated (N-linked (GlcNAc...) asparagine; by host). Residues Leu423–Pro443 traverse the membrane as a helical segment. Residues Thr444–Pro483 lie on the Cytoplasmic side of the membrane. Residues His445, His447, Cys453, His457, Cys465, and Cys467 each contribute to the Zn(2+) site.

It belongs to the arenaviridae GPC protein family. As to quaternary structure, homotetramer; disulfide-linked. In terms of assembly, homotetramer. GP2 homotetramers bind through ionic interactions with GP1 homotetramers to form the GP complex together with the stable signal peptide. The GP-C polyprotein interacts with the host protease MBTPS1/SKI-1 resulting in the polyprotein processing. Specific enzymatic cleavages in vivo yield mature proteins. GP-C polyprotein is cleaved in the endoplasmic reticulum by the host protease MBTPS1. Only cleaved glycoprotein is incorporated into virions. Post-translationally, the SSP remains stably associated with the GP complex following cleavage by signal peptidase and plays crucial roles in the trafficking of GP through the secretory pathway. In terms of processing, myristoylation is necessary for GP2-mediated fusion activity.

The protein localises to the virion membrane. It is found in the host endoplasmic reticulum membrane. Its subcellular location is the host Golgi apparatus membrane. It localises to the host cell membrane. Its function is as follows. Class I viral fusion protein that directs fusion of viral and host endosomal membranes, leading to delivery of the nucleocapsid into the cytoplasm. Membrane fusion is mediated by irreversible conformational changes induced upon acidification in the endosome. Stable signal peptide (SSP): cleaved and functions as a signal peptide. In addition, it is also retained as the third component of the GP complex. The SSP is required for efficient glycoprotein expression, post-translational maturation cleavage of GP1 and GP2, glycoprotein transport to the cell surface plasma membrane, formation of infectious virus particles, and acid pH-dependent glycoprotein-mediated cell fusion. Functionally, interacts with the host receptor. This chain is Pre-glycoprotein polyprotein GP complex, found in Peromyscus californicus (California mouse).